Reading from the N-terminus, the 35-residue chain is uncharacterized protein (35 aa).

The N-terminal stretch at 1 to 25 is a signal peptide; the sequence is MTERKLLQLLRRPFISLSLFTALRA.

This is an uncharacterized protein from Saccharomyces cerevisiae (strain ATCC 204508 / S288c) (Baker's yeast).